The chain runs to 434 residues: Epimerase FSL3 (434 aa).

Substrate is bound at residue 125–126 (GF). Glu392 serves as the catalytic Proton acceptor.

Belongs to the aldose epimerase family. As to quaternary structure, monomer.

Its pathway is secondary metabolite biosynthesis. Functionally, epimerase; part of the gene cluster that mediates the biosynthesis of fusarielins F, G and H, decaketide compounds with 5 methylations and a decaline core that act as mycoestrogens as they stimulate growth of MCF-7 breast cancer cells. The initial compound in the pathway is produced by the reducing polyketide synthase FSL1. FSL1 lacks an active enoyl reductase (ER) domain and biosynthesis of fusarielins relies on the trans-acting enoyl reductase FSL5, before it is released through hydrolysis catalyzed by the thioesterase FSL2. Fusarielins F, G, and H have a C11=C12 cis double bond and is fully reduced between C10 and C11 and between C12 and C13. FSL3 can be involved in the formation of the C11=C12 cis double bond by moving a hypothetical C10=C11 or C12=C13 trans double bond to form prefusarielin. Prefusarielin is oxygenated at C15 and C16 by the cytochrome P450 monooxygenase FSL4, resulting in fusarielin F, which subsequently is epoxidized into fusarielin G by the same enzyme. The final step in the pathway is a reduction of the carboxylic acid moiety to yield fusarielin H via a still undetermined mechanism. The protein is Epimerase FSL3 of Gibberella zeae (strain ATCC MYA-4620 / CBS 123657 / FGSC 9075 / NRRL 31084 / PH-1) (Wheat head blight fungus).